The chain runs to 246 residues: MPALRFLALLASLLATSRVGLATLADIVGGRRAQPQEFPFLASIQKQGRPFCAGALVHPRFVLTAASCFRGKNSGSASVVLGAYDLRQQEQSRQTFSIRSISQNGYDPRQNLNDVLLLQLDREARLTPSVALVPLPPQNATVEAGTNCQVAGWGTQRLRRLFSRFPRVLNVTVTSNPCLPRDMCIGVFSRRGRISQGDRGTPLVCNGLAQGVASFLRRRFRRSSGFFTRVALFRNWIDSVLNNPPA.

The N-terminal stretch at 1–19 is a signal peptide; it reads MPALRFLALLASLLATSRV. Residues 20–26 constitute a propeptide that is removed on maturation; that stretch reads GLATLAD. The Peptidase S1 domain maps to 27–242; it reads IVGGRRAQPQ…FRNWIDSVLN (216 aa). An intrachain disulfide couples Cys-52 to Cys-68. N-linked (GlcNAc...) asparagine glycans are attached at residues Asn-139 and Asn-170. Disulfide bonds link Cys-148–Cys-205 and Cys-178–Cys-184. The propeptide occupies 245–246; that stretch reads PA.

It belongs to the peptidase S1 family. Elastase subfamily.

It localises to the cytoplasmic granule membrane. Functionally, this is a neutrophil granule-derived antibacterial and monocyte- and fibroblast-specific chemotactic glycoprotein. Binds heparin. In Sus scrofa (Pig), this protein is Azurocidin.